The sequence spans 162 residues: MQRSEIVQAVTLLVVVFAITTAECTCPGNLDWQEYDGHCYWASTYQVRWNDAQLACQTVHPGAYLATIQSQLENAFISETVSNNRLWIGLNDIDLEGHYVWSNGEATDFTYWSSNNPNNWENQDCGVVNYDTVTGQWDDDDCNKNKNFLCKMPIIGCPPCGI.

Positions 1 to 24 are cleaved as a signal peptide; sequence MQRSEIVQAVTLLVVVFAITTAEC. The C-type lectin domain maps to 25-152; that stretch reads TCPGNLDWQE…NKNKNFLCKM (128 aa). 3 cysteine pairs are disulfide-bonded: Cys-26–Cys-39, Cys-56–Cys-150, and Cys-125–Cys-142.

Homotetramer; disulfide-linked. As to expression, coelemic fluid.

Sugar-binding protein which recognizes specific carbohydrate structures and agglutinates a variety of animal cells by binding to cell-surface glycoproteins and glycolipids. Calcium-dependent lectin. Invertebrate lectins may be involved in defense functions. This Megabalanus rosa (Acorn barnacle) protein is Lectin BRA-3.